Reading from the N-terminus, the 130-residue chain is Protein ApaG (130 aa).

The ApaG domain occupies 3-127 (RALTRDIEVT…FSLDSPGLVR (125 aa)).

This chain is Protein ApaG, found in Sinorhizobium fredii (strain NBRC 101917 / NGR234).